The chain runs to 81 residues: Delta-conotoxin-like Ac6.3 (81 aa).

Positions 1–22 (MKLTCVMIVAVLFLTAWTFVTA) are cleaved as a signal peptide. Residues 23 to 51 (DDSRNGLENLSPKARHEMKNPEASKSNKR) constitute a propeptide that is removed on maturation. Disulfide bonds link Cys54/Cys69, Cys61/Cys73, and Cys68/Cys78.

This sequence belongs to the conotoxin O1 superfamily. Expressed by the venom duct.

It is found in the secreted. Functionally, delta-conotoxins bind to site 6 of voltage-gated sodium channels (Nav) and inhibit the inactivation process. The polypeptide is Delta-conotoxin-like Ac6.3 (Conus achatinus (Little frog cone)).